The primary structure comprises 576 residues: Catalase-peroxidase (576 aa).

A cross-link (tryptophyl-tyrosyl-methioninium (Trp-Tyr) (with M-250)) is located at residues 95–224 (WHAAGSYRAA…LAAVQMGLIY (130 aa)). Histidine 96 serves as the catalytic Proton acceptor. Positions 224 to 250 (YVNPEGVNGQPDPARTALHIRETFARM) form a cross-link, tryptophyl-tyrosyl-methioninium (Tyr-Met) (with W-95). A heme b-binding site is contributed by histidine 265.

It belongs to the peroxidase family. Peroxidase/catalase subfamily. In terms of assembly, homotetramer. Requires heme b as cofactor. Formation of the three residue Trp-Tyr-Met cross-link is important for the catalase, but not the peroxidase activity of the enzyme.

It carries out the reaction H2O2 + AH2 = A + 2 H2O. The catalysed reaction is 2 H2O2 = O2 + 2 H2O. Bifunctional enzyme with both catalase and broad-spectrum peroxidase activity. Also displays NADH oxidase, INH lyase and isonicotinoyl-NAD synthase activities. Important for stationary phase survival. This chain is Catalase-peroxidase (katG), found in Rhodobacter capsulatus (Rhodopseudomonas capsulata).